The primary structure comprises 567 residues: Glutamine--tRNA ligase (567 aa).

A 'HIGH' region motif is present at residues 47–57; the sequence is PEPNGYLHIGH. Residues 48–50 and 54–60 contribute to the ATP site; these read EPN and HIGHAKS. The L-glutamine site is built by aspartate 80 and tyrosine 225. Residues threonine 244 and 274 to 275 contribute to the ATP site; that span reads RL. Residues 281–285 carry the 'KMSKS' region motif; the sequence is ITSKR.

The protein belongs to the class-I aminoacyl-tRNA synthetase family. As to quaternary structure, monomer.

The protein resides in the cytoplasm. It catalyses the reaction tRNA(Gln) + L-glutamine + ATP = L-glutaminyl-tRNA(Gln) + AMP + diphosphate. This is Glutamine--tRNA ligase from Pseudomonas putida (strain ATCC 47054 / DSM 6125 / CFBP 8728 / NCIMB 11950 / KT2440).